We begin with the raw amino-acid sequence, 367 residues long: Terpene cyclase verU1 (367 aa).

A helical transmembrane segment spans residues 8–28; the sequence is IRCSLLLLGLVGIYTVWISSF. Asn50 carries an N-linked (GlcNAc...) asparagine glycan. 8 helical membrane passes run 57 to 77, 85 to 105, 120 to 140, 169 to 189, 197 to 217, 239 to 259, 292 to 312, and 327 to 347; these read FTGI…YWPV, LSLI…LFAL, MAMF…PIYC, CLLG…PAVV, IIAL…LTHL, ISAM…SLLA, FQWD…GLHI, and LIPE…AALY. N-linked (GlcNAc...) asparagine glycosylation is present at Asn352.

The protein belongs to the membrane-bound ascI terpene cyclase family.

Its subcellular location is the membrane. The protein operates within secondary metabolite biosynthesis; terpenoid biosynthesis. It participates in mycotoxin biosynthesis. In terms of biological role, terpene cyclase; part of the gene cluster that mediates the biosynthesis of the neurotoxin verrucosidin, a methylated alpha-pyrone polyketide that inhibits oxidative phosphorylation in mitochondria and thereby causes neurological diseases. The carbon backbone of verrucosidin is synthesized by the HR-PKS verA, and further modified by the other verrucodidin cluster enzymes. In Penicillium polonicum, this protein is Terpene cyclase verU1.